A 99-amino-acid polypeptide reads, in one-letter code: Large ribosomal subunit protein uL23 (99 aa).

The protein belongs to the universal ribosomal protein uL23 family. Part of the 50S ribosomal subunit. Contacts protein L29, and trigger factor when it is bound to the ribosome.

In terms of biological role, one of the early assembly proteins it binds 23S rRNA. One of the proteins that surrounds the polypeptide exit tunnel on the outside of the ribosome. Forms the main docking site for trigger factor binding to the ribosome. The protein is Large ribosomal subunit protein uL23 of Rhodopseudomonas palustris (strain BisB5).